The following is a 253-amino-acid chain: MLTKRIIPCLDVKGGRVVKGVQFLELRDAGDPVEIAEIYDRQGADELTFLDITASSDARDIIIDVVRRTAERVFMPLTVGGGVRTVEDIRRLLNAGADKVSINTAAVHRPEFVKEAAERFGSQCTVVAIDARRVPGEDRWEVYTHGGRNATGIDAVEWAQRMEAYGSGEILLTSMDRDGTKDGYDLPLTRAVADAVSIPVIASGGVGNLEHLYDGFTKGGASACLAASIFHYREYTIQEAKEYLRERGVPVRI.

Residues Asp11 and Asp130 contribute to the active site.

It belongs to the HisA/HisF family. As to quaternary structure, heterodimer of HisH and HisF.

The protein localises to the cytoplasm. It carries out the reaction 5-[(5-phospho-1-deoxy-D-ribulos-1-ylimino)methylamino]-1-(5-phospho-beta-D-ribosyl)imidazole-4-carboxamide + L-glutamine = D-erythro-1-(imidazol-4-yl)glycerol 3-phosphate + 5-amino-1-(5-phospho-beta-D-ribosyl)imidazole-4-carboxamide + L-glutamate + H(+). The protein operates within amino-acid biosynthesis; L-histidine biosynthesis; L-histidine from 5-phospho-alpha-D-ribose 1-diphosphate: step 5/9. Functionally, IGPS catalyzes the conversion of PRFAR and glutamine to IGP, AICAR and glutamate. The HisF subunit catalyzes the cyclization activity that produces IGP and AICAR from PRFAR using the ammonia provided by the HisH subunit. The sequence is that of Imidazole glycerol phosphate synthase subunit HisF from Geotalea uraniireducens (strain Rf4) (Geobacter uraniireducens).